The following is a 240-amino-acid chain: Protein unc-119 homolog A (240 aa).

Gly residues predominate over residues 1-12; sequence MKVKKGGGGTGS. A disordered region spans residues 1–62; it reads MKVKKGGGGT…PLQGKQPIGP (62 aa). Ser37, Ser39, and Ser41 each carry phosphoserine; by CK2. Residue Tyr131 participates in tetradecanoate binding.

This sequence belongs to the PDE6D/unc-119 family. May interact with GTP-bound ARL1. Interacts with ARL2 and ARL3 (GTP-bound forms); this promotes the release of myristoylated cargo proteins. Found in a complex with ARL3, RP2 and UNC119; RP2 induces hydrolysis of GTP ARL3 in the complex, leading to the release of UNC119. Interacts with NPHP3 (when myristoylated). Interacts with CYS1 (when myristoylated). Interacts with MACIR; interaction only takes place when UNC119 is not liganded with myristoylated proteins. Interacts with CABP4; in the absence of calcium. Interacts with DNM1; leading to a decrease of DNM1 GTPase activity. Interacts with LCK; this interaction plays a crucial role in activation of LCK. Interacts with FYN. Interacts with RAB11A; in a cell cycle-dependent manner. Interacts with LYN (via SH2 and SH3 domains); leading to LYN activation. Found in a complex with ABL1, ABL2, CRK and UNC119; leading to the inhibition of CRK phosphorylation by ABL kinases. Interacts with CD44. Interacts with KLHL18 (via kelch repeats). Interacts with PPP3CA, PPP3CB and PPP3CC. Interacts with USP48; this interaction promotes UNC119 stability. Post-translationally, phosphorylation suppresses its interaction with KLHL18 and down-regulates its KLHL18-mediated degradation. Phosphorylated more under light conditions than dark conditions. Dephosphorylated by calcineurin. As to expression, localized in photoreceptor synapses in the outer plexiform layer of the retina.

The protein localises to the cytoplasm. Its subcellular location is the cytoskeleton. It is found in the microtubule organizing center. It localises to the centrosome. The protein resides in the spindle. The protein localises to the spindle pole. In terms of biological role, involved in synaptic functions in photoreceptor cells, the signal transduction in immune cells as a Src family kinase activator, endosome recycling, the uptake of bacteria and endocytosis, protein trafficking in sensory neurons and as lipid-binding chaperone with specificity for a diverse subset of myristoylated proteins. Specifically binds the myristoyl moiety of a subset of N-terminally myristoylated proteins and is required for their localization. Binds myristoylated GNAT1 and is required for G-protein localization and trafficking in sensory neurons. Probably plays a role in trafficking proteins in photoreceptor cells. Plays important roles in mediating Src family kinase signals for the completion of cytokinesis via RAB11A. This Mus musculus (Mouse) protein is Protein unc-119 homolog A (Unc119).